A 440-amino-acid polypeptide reads, in one-letter code: MNITVIGTGYVGLVTGVSLSEIGHHVTCIDIDAHKIDEMRKGISPIFEPGLEELMRKNTADGRLNFETSYEKGLAQADIIFIAVGTPQKSDGHANLEQITDAAKRIAKHVKRDTVVVTKSTVPVGTNDLINGLITEHLAEPVSISVASNPEFLREGSAIYDTFHGDRIVIGTADEKTANTLEELFRPFQIPIYQTDIRSAEMIKYASNAFLATKISFINEISNICEKVGADIEAVAYGMGQDKRIGSQFLKAGIGYGGSCFPKDTNALVQIAGNVEHDFELLKSVIKVNNNQQAMLVDKALNRLGGVTGKTIALLGLSFKPNTDDMREAPSIVIADRLAALDARIRAYDPIAVSHAKHVLPQAVEYKETIEEAVKGSDAVMILTDWADIKQFPLAAYQDLMETPLIFDGRNCYTLDEALAAGVEYYSVGRKAVVPSGAIQ.

NAD(+) is bound by residues 2 to 19, Val-11, Asp-30, Lys-35, Thr-121, and Glu-155; that span reads NITV…GVSL. Substrate is bound by residues 151–155, Lys-204, Asn-208, 249–253, and Gly-257; these read EFLRE and FLKAG. Cys-260 serves as the catalytic Nucleophile. Residue Lys-263 coordinates NAD(+). A substrate-binding site is contributed by Lys-320. Residue Arg-327 participates in NAD(+) binding.

The protein belongs to the UDP-glucose/GDP-mannose dehydrogenase family. Post-translationally, phosphorylated on tyrosine residue(s). Phosphorylated by YwqD and dephosphorylated by YwqE in vitro.

The protein resides in the cytoplasm. It catalyses the reaction UDP-alpha-D-glucose + 2 NAD(+) + H2O = UDP-alpha-D-glucuronate + 2 NADH + 3 H(+). The protein operates within nucleotide-sugar biosynthesis; UDP-alpha-D-glucuronate biosynthesis; UDP-alpha-D-glucuronate from UDP-alpha-D-glucose: step 1/1. Competitively inhibited by UDP-glucose. Activated by phosphorylation, which may increase affinity for NAD(+); inhibited by dephosphorylation. Functionally, catalyzes the conversion of UDP-glucose into UDP-glucuronate, one of the precursors of teichuronic acid. In Bacillus subtilis (strain 168), this protein is UDP-glucose 6-dehydrogenase YwqF (ywqF).